The chain runs to 494 residues: MAWPRFLQRGALLTSFSHHHLAVFLLTFFSYSLLHASRKTFSNVKVSISKQWTPNAFNTSLDLPAEIWSSNHLFPSTEEATLFLGTLDTVFLFSYAVGLFISGIIGDRLNLRWVLSFGMCSSAFVVFVFGTLTEWLHFYNKWFYCGLWIVNGLLQSTGWPCVVAVMGNWFGKAGRGVVFGLWSACASVGNILGAFLASSVLQYGYEYAFLVTASVQFAGGIIIFFGLLVSPEEIGLPSIGAEESSEEDSQRPLIDGAENEDDYEPNYSIQEDRAVVQVKAISFHQACCLPGVIPYSLAYACLKLVNYSFFFWLPFYLSNNFGWKEAEADKLSIWYDVGGIIGGTLLGFISDVLQKRAPVLALSLFLAVWSLVGYSRSPNNKSINALLMTITGFFIGGPSNMVSSAISADLGRQELIQGNSEALATVTGIVDGTGSIGAAVGQYLVSLIQDNLGWMWVFYFFILMTSCTILFILPLIVREVFSLVQRRQAHSLNE.

The helical transmembrane segment at 10–30 (GALLTSFSHHHLAVFLLTFFS) threads the bilayer. N-linked (GlcNAc...) asparagine glycosylation is present at Asn-58. 5 helical membrane passes run 81-101 (TLFL…GLFI), 113-133 (WVLS…GTLT), 146-166 (GLWI…VAVM), 177-197 (VVFG…AFLA), and 209-229 (FLVT…GLLV). The segment at 240-261 (GAEESSEEDSQRPLIDGAENED) is disordered. The next 6 helical transmembrane spans lie at 297-317 (LAYA…PFYL), 333-353 (IWYD…SDVL), 357-377 (APVL…YSRS), 386-406 (LLMT…SSAI), 428-448 (GIVD…VSLI), and 457-477 (VFYF…PLIV).

It belongs to the major facilitator superfamily. Organophosphate:Pi antiporter (OPA) (TC 2.A.1.4) family. Interacts with ATRAID; the interaction is direct and both proteins are mutually dependent for their stability. In terms of processing, glycosylated.

The protein localises to the endoplasmic reticulum membrane. The protein resides in the lysosome membrane. In terms of biological role, unlike the other SLC37 members, lacks glucose-6-phosphate antiporter activity. In osteoclasts, forms a transporter complex with ATRAID for nitrogen-containing-bisphophonates (N-BPs) required for releasing N-BP molecules that have trafficked to lysosomes through fluid-phase endocytosis into the cytosol. This is Sugar phosphate exchanger 3 (Slc37a3) from Mus musculus (Mouse).